A 262-amino-acid polypeptide reads, in one-letter code: Hydroxyethylthiazole kinase (262 aa).

Met50 contacts substrate. Residues Arg125 and Thr171 each contribute to the ATP site. Substrate is bound at residue Gly198.

The protein belongs to the Thz kinase family. Mg(2+) serves as cofactor.

The catalysed reaction is 5-(2-hydroxyethyl)-4-methylthiazole + ATP = 4-methyl-5-(2-phosphooxyethyl)-thiazole + ADP + H(+). The protein operates within cofactor biosynthesis; thiamine diphosphate biosynthesis; 4-methyl-5-(2-phosphoethyl)-thiazole from 5-(2-hydroxyethyl)-4-methylthiazole: step 1/1. Its function is as follows. Catalyzes the phosphorylation of the hydroxyl group of 4-methyl-5-beta-hydroxyethylthiazole (THZ). The protein is Hydroxyethylthiazole kinase of Escherichia coli O6:H1 (strain CFT073 / ATCC 700928 / UPEC).